The sequence spans 200 residues: Recombination protein RecR (200 aa).

The C4-type zinc-finger motif lies at 59-74; sequence CEKCNTFTEAQVCEVC. Residues 82 to 177 form the Toprim domain; it reads ALLCVVETPA…AVTRLARGVP (96 aa).

This sequence belongs to the RecR family.

May play a role in DNA repair. It seems to be involved in an RecBC-independent recombinational process of DNA repair. It may act with RecF and RecO. This chain is Recombination protein RecR, found in Burkholderia pseudomallei (strain 1106a).